We begin with the raw amino-acid sequence, 181 residues long: Adenine phosphoribosyltransferase (181 aa).

The protein belongs to the purine/pyrimidine phosphoribosyltransferase family. As to quaternary structure, homodimer.

Its subcellular location is the cytoplasm. It carries out the reaction AMP + diphosphate = 5-phospho-alpha-D-ribose 1-diphosphate + adenine. The protein operates within purine metabolism; AMP biosynthesis via salvage pathway; AMP from adenine: step 1/1. Its function is as follows. Catalyzes a salvage reaction resulting in the formation of AMP, that is energically less costly than de novo synthesis. This Aliivibrio salmonicida (strain LFI1238) (Vibrio salmonicida (strain LFI1238)) protein is Adenine phosphoribosyltransferase.